The sequence spans 610 residues: Diol dehydratase-reactivating factor large subunit (610 aa).

11-13 (NSS) serves as a coordination point for ATP. Residues Thr-105, Asp-166, and Asp-183 each contribute to the Mg(2+) site. Residues 459–462 (EEIK), 557–558 (GS), and Arg-591 contribute to the ATP site.

Belongs to the DdrA/PduG family. Component of the DDR complex, a heterotetramer of DdrA(2)/DdrB(2). The DDR complex interacts with the diol dehydratase complex in the presence of ADP but not ATP. Requires Mg(2+) as cofactor.

The catalysed reaction is ATP + H2O = ADP + phosphate + H(+). Its function is as follows. Large subunit of the diol dehydratase-reactivating factor (DDR), which reactivates suicidally inhibited adenosylcobalamin-dependent diol dehydratase (DD, pddA, pddB, pddC). DDR acts as a chaperone, reactivating inactivated DD holoenzyme in the presence of ATP, Mg(2+) and free adenosylcobalamin (AdoCbl), by mediating the exchange of the tightly bound damaged cofactor AdoCbl for a free intact one. Reactivation takes place in two steps: ADP-dependent cobalamin release, then ATP-dependent dissociation of the DD apoenzyme-DDR complex. DDR has weak ATPase activity which is required for DD reactivation. This subunit contains the adenosine nucleotide binding site. Activates glycerol-inactivated, O2-inactivated holoenzyme and inactivated enzyme-cyanocobalamin complex. Also reactivates glycerol-inactivated hologlycerol dehydratase, a DD isozyme. This Klebsiella michiganensis (strain ATCC 8724 / DSM 4798 / JCM 20051 / NBRC 3318 / NRRL B-199 / KCTC 1686 / BUCSAV 143 / CCM 1901) protein is Diol dehydratase-reactivating factor large subunit.